We begin with the raw amino-acid sequence, 324 residues long: Biotin synthase (324 aa).

The Radical SAM core domain maps to 50–278; it reads HAGPAFTCAI…QADILVAGGR (229 aa). The [4Fe-4S] cluster site is built by cysteine 67, cysteine 71, and cysteine 74. Positions 143 and 203 each coordinate [2Fe-2S] cluster.

The protein belongs to the radical SAM superfamily. Biotin synthase family. As to quaternary structure, homodimer. [4Fe-4S] cluster serves as cofactor. Requires [2Fe-2S] cluster as cofactor.

The catalysed reaction is (4R,5S)-dethiobiotin + (sulfur carrier)-SH + 2 reduced [2Fe-2S]-[ferredoxin] + 2 S-adenosyl-L-methionine = (sulfur carrier)-H + biotin + 2 5'-deoxyadenosine + 2 L-methionine + 2 oxidized [2Fe-2S]-[ferredoxin]. Its pathway is cofactor biosynthesis; biotin biosynthesis; biotin from 7,8-diaminononanoate: step 2/2. Catalyzes the conversion of dethiobiotin (DTB) to biotin by the insertion of a sulfur atom into dethiobiotin via a radical-based mechanism. This chain is Biotin synthase, found in Oleidesulfovibrio alaskensis (strain ATCC BAA-1058 / DSM 17464 / G20) (Desulfovibrio alaskensis).